A 62-amino-acid chain; its full sequence is Conotoxin Im11.9 (62 aa).

The first 22 residues, 1–22, serve as a signal peptide directing secretion; sequence MFRVTSVLLVIVLLNLVVLTNA. 4 disulfide bridges follow: C23–C33, C27–C38, C32–C41, and C37–C46. A propeptide spanning residues 23-49 is cleaved from the precursor; the sequence is CHMDCSKMTCCSGICCFYCGRPMCPGT.

Belongs to the conotoxin I2 superfamily. Expressed by the venom duct.

It localises to the secreted. Probable neurotoxin. The polypeptide is Conotoxin Im11.9 (Conus imperialis (Imperial cone)).